An 835-amino-acid chain; its full sequence is Cap-specific mRNA (nucleoside-2'-O-)-methyltransferase 1 (835 aa).

The segment at 1-66 (MKRRNDSECT…TEGKQRSSDS (66 aa)) is disordered. A Bipartite nuclear localization signal motif is present at residues 2–19 (KRRNDSECTAPLKKQKKR). Residues Ser-28, Ser-31, Ser-53, Ser-66, and Ser-91 each carry the phosphoserine modification. A compositionally biased stretch (basic and acidic residues) spans 57-66 (TEGKQRSSDS). The 47-residue stretch at 87–133 (YNSVSQKLMAKMGFKEGEGLGKYSQGRKDIVEASNQKGRRGLGLTLQ) folds into the G-patch domain. Lys-108 bears the N6-acetyllysine mark. Substrate contacts are provided by residues 203-207 (KSVFD) and Arg-218. In terms of domain architecture, RrmJ-type SAM-dependent 2'-O-MTase spans 231–450 (FFLNRAAMKM…ERYVVCKGLK (220 aa)). Asn-234 serves as a coordination point for S-adenosyl-L-methionine. Lys-239 is a catalytic residue. Residues 277–283 (CAGPGGF) and 335–336 (DI) each bind S-adenosyl-L-methionine. Asp-364 is an active-site residue. Residue 374 to 376 (NLQ) participates in substrate binding. The active-site Proton acceptor is the Lys-404. Asn-439 contacts substrate. The interaction with POLR2A stretch occupies residues 727–835 (SSGTPKLSYT…VLSFIQTHSA (109 aa)). Residues 752–786 (RTVNEPWTMGFSKSFKRKFFYNKKTKNSTFDLPAD) form the WW domain.

Interacts with POLR2A (via C-terminus).

The protein localises to the nucleus. The catalysed reaction is a 5'-end (N(7)-methyl 5'-triphosphoguanosine)-ribonucleoside in mRNA + S-adenosyl-L-methionine = a 5'-end (N(7)-methyl 5'-triphosphoguanosine)-(2'-O-methyl-ribonucleoside) in mRNA + S-adenosyl-L-homocysteine + H(+). Functionally, S-adenosyl-L-methionine-dependent methyltransferase that mediates mRNA cap1 2'-O-ribose methylation to the 5'-cap structure of mRNAs. Methylates the ribose of the first nucleotide of a m(7)GpppG-capped mRNA and small nuclear RNA (snRNA) to produce m(7)GpppRm (cap1). Displays a preference for cap0 transcripts. Cap1 modification is linked to higher levels of translation. May be involved in the interferon response pathway. This Bos taurus (Bovine) protein is Cap-specific mRNA (nucleoside-2'-O-)-methyltransferase 1 (CMTR1).